The primary structure comprises 309 residues: ASC1-like protein 1 (309 aa).

6 consecutive transmembrane segments (helical) span residues 27–47, 84–104, 130–150, 156–176, 215–235, and 260–280; these read FFALPLFAVFFLVVRYLLDCF, CVYFLSGEILSLSVTYNEPWF, AVYMYAAGFYTYSIFALMFWE, FGVSMSHHVATVALIVLSYVF, FLLFVVSWVLLRLTYFPFWIL, and YVFNSLLFSLLVLHIYWWVLI. Residues 75-289 form the TLC domain; that stretch reads RKFKESAWKC…IYRMLVRQIK (215 aa).

The protein localises to the endoplasmic reticulum membrane. Mediates resistance to sphinganine-analog mycotoxins (SAMs) by restoring the sphingolipid biosynthesis. Could salvage the transport of GPI-anchored proteins from the endoplasmic reticulum to the Golgi apparatus in ceramides-depleted cells after SAM exposure. In Oryza sativa subsp. japonica (Rice), this protein is ASC1-like protein 1.